We begin with the raw amino-acid sequence, 605 residues long: Elongation factor 4 (605 aa).

One can recognise a tr-type G domain in the interval 9–191; the sequence is DTIRNFCIIA…AIIKRVPAPV (183 aa). Residues 21–26 and 138–141 each bind GTP; these read DHGKST and NKID.

It belongs to the TRAFAC class translation factor GTPase superfamily. Classic translation factor GTPase family. LepA subfamily.

Its subcellular location is the cell inner membrane. The enzyme catalyses GTP + H2O = GDP + phosphate + H(+). In terms of biological role, required for accurate and efficient protein synthesis under certain stress conditions. May act as a fidelity factor of the translation reaction, by catalyzing a one-codon backward translocation of tRNAs on improperly translocated ribosomes. Back-translocation proceeds from a post-translocation (POST) complex to a pre-translocation (PRE) complex, thus giving elongation factor G a second chance to translocate the tRNAs correctly. Binds to ribosomes in a GTP-dependent manner. The polypeptide is Elongation factor 4 (Chlorobium phaeobacteroides (strain BS1)).